The following is a 469-amino-acid chain: tRNA(Ile)-lysidine synthase (469 aa).

An ATP-binding site is contributed by 26-31; it reads SGGPDS.

This sequence belongs to the tRNA(Ile)-lysidine synthase family.

It is found in the cytoplasm. The enzyme catalyses cytidine(34) in tRNA(Ile2) + L-lysine + ATP = lysidine(34) in tRNA(Ile2) + AMP + diphosphate + H(+). Ligates lysine onto the cytidine present at position 34 of the AUA codon-specific tRNA(Ile) that contains the anticodon CAU, in an ATP-dependent manner. Cytidine is converted to lysidine, thus changing the amino acid specificity of the tRNA from methionine to isoleucine. This is tRNA(Ile)-lysidine synthase from Clostridium perfringens (strain ATCC 13124 / DSM 756 / JCM 1290 / NCIMB 6125 / NCTC 8237 / Type A).